The primary structure comprises 203 residues: Holliday junction branch migration complex subunit RuvA (203 aa).

The tract at residues 1 to 64 (MIGRLRGIII…EDAQLLYGFN (64 aa)) is domain I. The domain II stretch occupies residues 65 to 142 (NKQERTLFKE…KGLHGDLFTP (78 aa)). A flexible linker region spans residues 143 to 154 (AADLVLTSPASP). The domain III stretch occupies residues 155–203 (ATNDAEQEAVAALVALGYKPQEASRMVSKIARPDASSETLIREALRAAL).

This sequence belongs to the RuvA family. In terms of assembly, homotetramer. Forms an RuvA(8)-RuvB(12)-Holliday junction (HJ) complex. HJ DNA is sandwiched between 2 RuvA tetramers; dsDNA enters through RuvA and exits via RuvB. An RuvB hexamer assembles on each DNA strand where it exits the tetramer. Each RuvB hexamer is contacted by two RuvA subunits (via domain III) on 2 adjacent RuvB subunits; this complex drives branch migration. In the full resolvosome a probable DNA-RuvA(4)-RuvB(12)-RuvC(2) complex forms which resolves the HJ.

It is found in the cytoplasm. Functionally, the RuvA-RuvB-RuvC complex processes Holliday junction (HJ) DNA during genetic recombination and DNA repair, while the RuvA-RuvB complex plays an important role in the rescue of blocked DNA replication forks via replication fork reversal (RFR). RuvA specifically binds to HJ cruciform DNA, conferring on it an open structure. The RuvB hexamer acts as an ATP-dependent pump, pulling dsDNA into and through the RuvAB complex. HJ branch migration allows RuvC to scan DNA until it finds its consensus sequence, where it cleaves and resolves the cruciform DNA. The protein is Holliday junction branch migration complex subunit RuvA of Escherichia coli O9:H4 (strain HS).